The chain runs to 393 residues: Riboflavin biosynthesis protein RibBA (393 aa).

Residues 1–200 are DHBP synthase; it reads MQLDSIDTAL…IEDLEKYRKS (200 aa). Residues 27–28, Asp-32, 139–143, and Glu-163 each bind D-ribulose 5-phosphate; these read RE and RRGHT. Glu-28 provides a ligand contact to Mg(2+). His-142 contributes to the Mg(2+) binding site. The segment at 201-393 is GTP cyclohydrolase II; that stretch reads SISKLDAKAK…TKKEKMGHLI (193 aa). 249–253 is a binding site for GTP; that stretch reads RIHSA. Zn(2+)-binding residues include Cys-254, Cys-265, and Cys-267. GTP-binding positions include Gln-270, 291-293, and Thr-313; that span reads EGR. Asp-325 functions as the Proton acceptor; for GTP cyclohydrolase activity in the catalytic mechanism. Arg-327 serves as the catalytic Nucleophile; for GTP cyclohydrolase activity. GTP contacts are provided by Ser-348 and Lys-353.

In the N-terminal section; belongs to the DHBP synthase family. It in the C-terminal section; belongs to the GTP cyclohydrolase II family. Requires Mg(2+) as cofactor. Mn(2+) is required as a cofactor. The cofactor is Zn(2+).

It carries out the reaction D-ribulose 5-phosphate = (2S)-2-hydroxy-3-oxobutyl phosphate + formate + H(+). It catalyses the reaction GTP + 4 H2O = 2,5-diamino-6-hydroxy-4-(5-phosphoribosylamino)-pyrimidine + formate + 2 phosphate + 3 H(+). The protein operates within cofactor biosynthesis; riboflavin biosynthesis; 2-hydroxy-3-oxobutyl phosphate from D-ribulose 5-phosphate: step 1/1. It participates in cofactor biosynthesis; riboflavin biosynthesis; 5-amino-6-(D-ribitylamino)uracil from GTP: step 1/4. Catalyzes the conversion of D-ribulose 5-phosphate to formate and 3,4-dihydroxy-2-butanone 4-phosphate. Functionally, catalyzes the conversion of GTP to 2,5-diamino-6-ribosylamino-4(3H)-pyrimidinone 5'-phosphate (DARP), formate and pyrophosphate. The sequence is that of Riboflavin biosynthesis protein RibBA from Staphylococcus saprophyticus subsp. saprophyticus (strain ATCC 15305 / DSM 20229 / NCIMB 8711 / NCTC 7292 / S-41).